We begin with the raw amino-acid sequence, 135 residues long: MAALRPLTKPKIVKKRTKKFIRHQSDRYVKIRRNWRKPRGIDNRVRSGFKGQMLMPNIGYGSNKKTKHMLPSGFKKFLVHNVKELEVLLMSNKSYCAEIAHNVSSKNRKVIVERAAQLAIKVTNPNARLRSEENE.

This sequence belongs to the eukaryotic ribosomal protein eL32 family. In terms of assembly, component of the large ribosomal subunit.

It localises to the cytoplasm. Functionally, component of the large ribosomal subunit. The ribosome is a large ribonucleoprotein complex responsible for the synthesis of proteins in the cell. This Ictalurus punctatus (Channel catfish) protein is Large ribosomal subunit protein eL32 (rpl32).